Consider the following 808-residue polypeptide: Probable E3 ubiquitin-protein ligase MARCHF10 (808 aa).

Disordered regions lie at residues 33 to 81 (LRRQ…LTEP), 101 to 268 (QTSV…RKAS), and 284 to 415 (SRRE…EVGV). Residues 34–49 (RRQEYRRDPNEKKRDQ) show a composition bias toward basic and acidic residues. The span at 237–249 (QAFQGKNSPQVLS) shows a compositional bias: polar residues. Composition is skewed to basic and acidic residues over residues 330–349 (KNFE…RSEP) and 379–397 (LPDR…ENAK). An RING-CH-type zinc finger spans residues 651-721 (DSEEEGDLCR…EMCKQGLLVD (71 aa)). C659, C662, C677, C679, H687, C690, C711, and C714 together coordinate Zn(2+). Residues 773-808 (ERERLSRNYPQPRTEENENSELGDGNEGSISQSQVV) form a disordered region.

The catalysed reaction is S-ubiquitinyl-[E2 ubiquitin-conjugating enzyme]-L-cysteine + [acceptor protein]-L-lysine = [E2 ubiquitin-conjugating enzyme]-L-cysteine + N(6)-ubiquitinyl-[acceptor protein]-L-lysine.. It participates in protein modification; protein ubiquitination. Functionally, E3 ubiquitin-protein ligase. E3 ubiquitin ligases accept ubiquitin from an E2 ubiquitin-conjugating enzyme in the form of a thioester and then directly transfer the ubiquitin to targeted substrates. The sequence is that of Probable E3 ubiquitin-protein ligase MARCHF10 from Homo sapiens (Human).